Reading from the N-terminus, the 37-residue chain is uncharacterized protein (37 aa).

Residues 1–21 (MQDLEIFLSIFAFIFVFYFGA) traverse the membrane as a helical segment.

The protein localises to the endoplasmic reticulum membrane. This is an uncharacterized protein from Saccharomyces cerevisiae (strain ATCC 204508 / S288c) (Baker's yeast).